Consider the following 213-residue polypeptide: Ribonuclease HII (213 aa).

In terms of domain architecture, RNase H type-2 spans 18–213 (GLHAGVDEVG…RPVKERLAKR (196 aa)). D24, E25, and D116 together coordinate a divalent metal cation.

The protein belongs to the RNase HII family. Mn(2+) serves as cofactor. The cofactor is Mg(2+).

Its subcellular location is the cytoplasm. It carries out the reaction Endonucleolytic cleavage to 5'-phosphomonoester.. Functionally, endonuclease that specifically degrades the RNA of RNA-DNA hybrids. This is Ribonuclease HII from Shewanella woodyi (strain ATCC 51908 / MS32).